A 649-amino-acid polypeptide reads, in one-letter code: 1-deoxy-D-xylulose-5-phosphate synthase (649 aa).

Thiamine diphosphate is bound by residues His73 and 114-116 (SHA). Asp145 contributes to the Mg(2+) binding site. Residues 146 to 147 (GA), Asn175, Tyr286, and Glu367 contribute to the thiamine diphosphate site. Mg(2+) is bound at residue Asn175.

Belongs to the transketolase family. DXPS subfamily. In terms of assembly, homodimer. It depends on Mg(2+) as a cofactor. Requires thiamine diphosphate as cofactor.

The catalysed reaction is D-glyceraldehyde 3-phosphate + pyruvate + H(+) = 1-deoxy-D-xylulose 5-phosphate + CO2. The protein operates within metabolic intermediate biosynthesis; 1-deoxy-D-xylulose 5-phosphate biosynthesis; 1-deoxy-D-xylulose 5-phosphate from D-glyceraldehyde 3-phosphate and pyruvate: step 1/1. Catalyzes the acyloin condensation reaction between C atoms 2 and 3 of pyruvate and glyceraldehyde 3-phosphate to yield 1-deoxy-D-xylulose-5-phosphate (DXP). The chain is 1-deoxy-D-xylulose-5-phosphate synthase from Rhodococcus jostii (strain RHA1).